A 213-amino-acid polypeptide reads, in one-letter code: Octanoyltransferase (213 aa).

Residues 27-209 form the BPL/LPL catalytic domain; that stretch reads AATPDEVWLC…RLLAAMPEPA (183 aa). Substrate is bound by residues 66-73, 140-142, and 153-155; these read RGGQVTYH, ALG, and GVA. Cys171 serves as the catalytic Acyl-thioester intermediate.

This sequence belongs to the LipB family.

It localises to the cytoplasm. The catalysed reaction is octanoyl-[ACP] + L-lysyl-[protein] = N(6)-octanoyl-L-lysyl-[protein] + holo-[ACP] + H(+). It functions in the pathway protein modification; protein lipoylation via endogenous pathway; protein N(6)-(lipoyl)lysine from octanoyl-[acyl-carrier-protein]: step 1/2. Functionally, catalyzes the transfer of endogenously produced octanoic acid from octanoyl-acyl-carrier-protein onto the lipoyl domains of lipoate-dependent enzymes. Lipoyl-ACP can also act as a substrate although octanoyl-ACP is likely to be the physiological substrate. The protein is Octanoyltransferase of Bordetella petrii (strain ATCC BAA-461 / DSM 12804 / CCUG 43448).